Here is a 389-residue protein sequence, read N- to C-terminus: Succinate--CoA ligase [ADP-forming] subunit beta (389 aa).

Residues 9–236 (RDLFEAHGVP…ERTEDPLEAK (228 aa)) form the ATP-grasp domain. ATP is bound by residues lysine 45, 52-54 (GRG), alanine 94, and glutamate 99. Positions 191 and 205 each coordinate Mg(2+). Substrate is bound by residues asparagine 256 and 318 to 320 (GIT).

Belongs to the succinate/malate CoA ligase beta subunit family. As to quaternary structure, heterotetramer of two alpha and two beta subunits. It depends on Mg(2+) as a cofactor.

The enzyme catalyses succinate + ATP + CoA = succinyl-CoA + ADP + phosphate. It carries out the reaction GTP + succinate + CoA = succinyl-CoA + GDP + phosphate. It participates in carbohydrate metabolism; tricarboxylic acid cycle; succinate from succinyl-CoA (ligase route): step 1/1. In terms of biological role, succinyl-CoA synthetase functions in the citric acid cycle (TCA), coupling the hydrolysis of succinyl-CoA to the synthesis of either ATP or GTP and thus represents the only step of substrate-level phosphorylation in the TCA. The beta subunit provides nucleotide specificity of the enzyme and binds the substrate succinate, while the binding sites for coenzyme A and phosphate are found in the alpha subunit. In Micrococcus luteus (strain ATCC 4698 / DSM 20030 / JCM 1464 / CCM 169 / CCUG 5858 / IAM 1056 / NBRC 3333 / NCIMB 9278 / NCTC 2665 / VKM Ac-2230) (Micrococcus lysodeikticus), this protein is Succinate--CoA ligase [ADP-forming] subunit beta.